Consider the following 368-residue polypeptide: Cobalt-precorrin-5B C(1)-methyltransferase (368 aa).

This sequence belongs to the CbiD family.

It carries out the reaction Co-precorrin-5B + S-adenosyl-L-methionine = Co-precorrin-6A + S-adenosyl-L-homocysteine. The protein operates within cofactor biosynthesis; adenosylcobalamin biosynthesis; cob(II)yrinate a,c-diamide from sirohydrochlorin (anaerobic route): step 6/10. In terms of biological role, catalyzes the methylation of C-1 in cobalt-precorrin-5B to form cobalt-precorrin-6A. This is Cobalt-precorrin-5B C(1)-methyltransferase from Brucella anthropi (strain ATCC 49188 / DSM 6882 / CCUG 24695 / JCM 21032 / LMG 3331 / NBRC 15819 / NCTC 12168 / Alc 37) (Ochrobactrum anthropi).